The sequence spans 98 residues: NADH-ubiquinone oxidoreductase chain 4L (98 aa).

Transmembrane regions (helical) follow at residues M1–L21, S29–L49, and I61–V81.

This sequence belongs to the complex I subunit 4L family. As to quaternary structure, core subunit of respiratory chain NADH dehydrogenase (Complex I) which is composed of 45 different subunits.

The protein localises to the mitochondrion inner membrane. It carries out the reaction a ubiquinone + NADH + 5 H(+)(in) = a ubiquinol + NAD(+) + 4 H(+)(out). Functionally, core subunit of the mitochondrial membrane respiratory chain NADH dehydrogenase (Complex I) which catalyzes electron transfer from NADH through the respiratory chain, using ubiquinone as an electron acceptor. Part of the enzyme membrane arm which is embedded in the lipid bilayer and involved in proton translocation. The chain is NADH-ubiquinone oxidoreductase chain 4L (MT-ND4L) from Procavia capensis (Rock hyrax).